The primary structure comprises 236 residues: Mitochondrial coenzyme A diphosphatase NUDT8 (236 aa).

The region spanning 25 to 172 is the Nudix hydrolase domain; that stretch reads LRARPASAAV…HFRYTLPVFL (148 aa). Lys70 carries the post-translational modification N6-succinyllysine. Residues 70–91 carry the Nudix box motif; that stretch reads KCDPADQDVVHTALRETREELG. Residues Glu85 and Glu89 each contribute to the Mg(2+) site.

This sequence belongs to the Nudix hydrolase family. In terms of assembly, monomer. The cofactor is Mg(2+). Requires Mn(2+) as cofactor.

The protein resides in the mitochondrion. It carries out the reaction an acyl-CoA + H2O = an acyl-4'-phosphopantetheine + adenosine 3',5'-bisphosphate + 2 H(+). The catalysed reaction is CoA + H2O = (R)-4'-phosphopantetheine + adenosine 3',5'-bisphosphate + 2 H(+). It catalyses the reaction acetyl-CoA + H2O = S-acetyl-4'-phosphopantetheine + adenosine 3',5'-bisphosphate + 2 H(+). The enzyme catalyses butanoyl-CoA + H2O = S-butanoyl-4'-phosphopantetheine + adenosine 3',5'-bisphosphate + 2 H(+). It carries out the reaction hexanoyl-CoA + H2O = hexanoyl-4'-phosphopantetheine + adenosine 3',5'-bisphosphate + 2 H(+). The catalysed reaction is octanoyl-CoA + H2O = S-octanoyl-4'-phosphopantetheine + adenosine 3',5'-bisphosphate + 2 H(+). It catalyses the reaction propanoyl-CoA + H2O = propanoyl-4'-phosphopantetheine + adenosine 3',5'-bisphosphate + 2 H(+). The enzyme catalyses malonyl-CoA + H2O = malonyl-4'-phosphopantetheine + adenosine 3',5'-bisphosphate + 2 H(+). It carries out the reaction succinyl-CoA + H2O = succinyl-4'-phosphopantetheine + adenosine 3',5'-bisphosphate + 2 H(+). The catalysed reaction is a 5'-end CoA-ribonucleoside in mRNA + H2O = a 5'-end phospho-adenosine-phospho-ribonucleoside in mRNA + (R)-4'-phosphopantetheine + 2 H(+). Functionally, acyl-CoA diphosphatase that mediates the hydrolysis of a wide range of CoA and CoA esters yielding 3',5'-ADP and the corresponding 4'-phosphopantetheine derivative as products. Hydrolyzes short- and medium-chain acyl-CoAs, exhibiting the highest activity toward free CoA, hexanoyl-CoA, and octanoyl-CoA and the lowest activity against acetyl-CoA. Exhibits decapping activity towards dpCoA-capped RNAs in vitro. This Homo sapiens (Human) protein is Mitochondrial coenzyme A diphosphatase NUDT8 (NUDT8).